The primary structure comprises 272 residues: Dermonecrotic toxin LvSicTox-alphaIC1bi (272 aa).

Residue histidine 5 is part of the active site. Glutamate 25 and aspartate 27 together coordinate Mg(2+). The Nucleophile role is filled by histidine 41. Intrachain disulfides connect cysteine 45–cysteine 51 and cysteine 47–cysteine 189. Aspartate 84 provides a ligand contact to Mg(2+).

It belongs to the arthropod phospholipase D family. Class II subfamily. Mg(2+) serves as cofactor. In terms of tissue distribution, expressed by the venom gland.

It localises to the secreted. The catalysed reaction is an N-(acyl)-sphingosylphosphocholine = an N-(acyl)-sphingosyl-1,3-cyclic phosphate + choline. It catalyses the reaction an N-(acyl)-sphingosylphosphoethanolamine = an N-(acyl)-sphingosyl-1,3-cyclic phosphate + ethanolamine. It carries out the reaction a 1-acyl-sn-glycero-3-phosphocholine = a 1-acyl-sn-glycero-2,3-cyclic phosphate + choline. The enzyme catalyses a 1-acyl-sn-glycero-3-phosphoethanolamine = a 1-acyl-sn-glycero-2,3-cyclic phosphate + ethanolamine. Its function is as follows. Dermonecrotic toxins cleave the phosphodiester linkage between the phosphate and headgroup of certain phospholipids (sphingolipid and lysolipid substrates), forming an alcohol (often choline) and a cyclic phosphate. This toxin acts on sphingomyelin (SM). It may also act on ceramide phosphoethanolamine (CPE), lysophosphatidylcholine (LPC) and lysophosphatidylethanolamine (LPE), but not on lysophosphatidylserine (LPS), and lysophosphatidylglycerol (LPG). It acts by transphosphatidylation, releasing exclusively cyclic phosphate products as second products. Induces dermonecrosis, hemolysis, increased vascular permeability, edema, inflammatory response, and platelet aggregation. This chain is Dermonecrotic toxin LvSicTox-alphaIC1bi, found in Loxosceles variegata (Recluse spider).